The primary structure comprises 279 residues: Phycobilisome rod-core linker polypeptide CpcG1 (279 aa).

The 179-residue stretch at 11-189 (SSQNQRVEGY…YWRDRQTLNA (179 aa)) folds into the PBS-linker domain.

The protein belongs to the phycobilisome linker protein family. As to quaternary structure, part of the phycobilisome, a hemidiscoidal structure that is composed of two distinct substructures: a core complex and a number of rods radiating from the core.

The protein localises to the cellular thylakoid membrane. Rod-core linker protein required for attachment of phycocyanin to allophycocyanin in cores of phycobilisomes. In terms of biological role, linker polypeptides determine the state of aggregation and the location of the disk-shaped phycobiliprotein units within the phycobilisome and modulate their spectroscopic properties in order to mediate a directed and optimal energy transfer. This chain is Phycobilisome rod-core linker polypeptide CpcG1, found in Nostoc sp. (strain PCC 7120 / SAG 25.82 / UTEX 2576).